The sequence spans 61 residues: Small ribosomal subunit protein uS14 (61 aa).

The Zn(2+) site is built by cysteine 24, cysteine 27, cysteine 40, and cysteine 43.

Belongs to the universal ribosomal protein uS14 family. Zinc-binding uS14 subfamily. Part of the 30S ribosomal subunit. Contacts proteins S3 and S10. Zn(2+) is required as a cofactor.

Functionally, binds 16S rRNA, required for the assembly of 30S particles and may also be responsible for determining the conformation of the 16S rRNA at the A site. This is Small ribosomal subunit protein uS14 from Mycobacterium leprae (strain Br4923).